The following is a 314-amino-acid chain: Transcriptional regulatory protein GlnL (314 aa).

The Response regulatory domain occupies 2-118 (RFFIADDDRA…EIVTVLQKVK (117 aa)). The residue at position 54 (Asp54) is a 4-aspartylphosphate.

Post-translationally, phosphorylated by GlnK.

Its subcellular location is the cytoplasm. Member of the two-component regulatory system GlnL/GlnK that positively regulates the expression of the glsA-glnT operon in response to glutamine. GlnL binds the promoter region of glsA-glnT in vitro. This Bacillus subtilis (strain 168) protein is Transcriptional regulatory protein GlnL (glnL).